Reading from the N-terminus, the 935-residue chain is Protein HIRA (935 aa).

WD repeat units follow at residues 14–58 (HDTG…DKKK), 72–111 (ESQS…NSMG), 131–170 (GHSM…DRIT), 174–213 (DIQL…CVKS), 222–261 (IEET…QTWK), 277–320 (RAMP…KPLF), and 325–362 (IFNH…IGEM). Residues 431-556 (SSDIQLTKSM…RNKKRKVPAT (126 aa)) are disordered. Residues 439–468 (SMEDNSKENESKNSEKTMMEERNKQIDVRK) are compositionally biased toward basic and acidic residues. Residues 480-492 (GTTTADPMTSLSS) are compositionally biased toward polar residues. Acidic residues predominate over residues 520 to 542 (DLEDSSDSDDDDEEEEEDMEISD).

Belongs to the WD repeat HIR1 family.

Its subcellular location is the nucleus. Functionally, required for replication-independent chromatin assembly and for the periodic repression of histone gene transcription during the cell cycle. The sequence is that of Protein HIRA from Caenorhabditis elegans.